The primary structure comprises 362 residues: uncharacterized protein (362 aa).

The helical transmembrane segment at 13 to 33 threads the bilayer; that stretch reads VLILSVGLNMLFLLLFYSAIF. The LysM domain maps to 314–357; it reads EEYVVQDGDSLWLIAKRFGIPMDKIIQKNGLNHHRLFPGKVLKL.

The protein belongs to the chlamydial CPn_0593/CT_474/TC_0759 family.

Its subcellular location is the membrane. This is an uncharacterized protein from Chlamydia pneumoniae (Chlamydophila pneumoniae).